Reading from the N-terminus, the 284-residue chain is Tropomyosin Per a 7.0102 (284 aa).

Residues 1-266 (MDAIKKKMQA…EDELVHEKEK (266 aa)) adopt a coiled-coil conformation.

The protein belongs to the tropomyosin family. In terms of assembly, homodimer. As to expression, expressed in striated skeletal muscle (at protein level).

Tropomyosin, in association with the troponin complex, plays a central role in the calcium dependent regulation of muscle contraction. The protein is Tropomyosin Per a 7.0102 of Periplaneta americana (American cockroach).